A 355-amino-acid chain; its full sequence is LIM/homeobox protein lim-4 (355 aa).

LIM zinc-binding domains are found at residues 96–155 (VICT…THVT) and 166–228 (PKCA…LVEG). A DNA-binding region (homeobox) is located at residues 239 to 298 (TKRVRTTFAEDQLSVLQTYFNRDSNPDGADLEKIASMTGLSKRVTQVWFQNSRARQKKWH). The interval 291-336 (RARQKKWHQKSEGDNGDSQRSSVGPSSPSQKSDSSSEMMYPTSVTT) is disordered. Low complexity predominate over residues 306 to 326 (GDSQRSSVGPSSPSQKSDSSS).

As to quaternary structure, interacts with transcription factor sox-2. As to expression, expressed in the AWB sensory neurons and in one RME motor neuron (RMEV), two RMD motor neurons (RMDL and RMDR), the RID, RIV, SAA and SIA interneurons and the SMB sensory/inter/motor neurons.

It localises to the nucleus. Its function is as follows. Transcription factor that binds to the promoter of target genes. Regulates genes involved in serotonin synthesis and release in serotonergic ADF neurons. Involved in specification of neuron cell fate, olfactory receptor expression, locomotion, and foraging behavior. Required in AWB olfactory neurons to repress AWC cell fate and promote the AWB cell fate during early development. Cooperates with additional factors to direct the differentiation of the olfactory neurons, functioning with the transcription factor sox-2 to suppress AWC terminal differentiation and promote AWB neuron differentiation. Involved in regulating terminal specification and maintenance of the SMB sensory/inter/motor neurons. Plays a role in regulation of RID motor neuron differentiation, but is dispensable for motor axon outgrowth in the dorsal nerve cord. May regulate its own expression. The polypeptide is LIM/homeobox protein lim-4 (Caenorhabditis elegans).